Reading from the N-terminus, the 436-residue chain is GTPase Der (436 aa).

EngA-type G domains follow at residues 4–167 (PVVA…PKDH) and 176–351 (IKFC…DNHA). GTP-binding positions include 10 to 17 (GRPNVGKS), 57 to 61 (DTGGI), 119 to 122 (NKID), 182 to 189 (GRPNVGKS), 229 to 233 (DTAGM), and 294 to 297 (NKWD). A KH-like domain is found at 352 to 436 (MRVQTNVLNE…PIKIIARPRK (85 aa)).

This sequence belongs to the TRAFAC class TrmE-Era-EngA-EngB-Septin-like GTPase superfamily. EngA (Der) GTPase family. As to quaternary structure, associates with the 50S ribosomal subunit.

GTPase that plays an essential role in the late steps of ribosome biogenesis. This Geobacillus thermodenitrificans (strain NG80-2) protein is GTPase Der.